The following is a 403-amino-acid chain: MSSYLFTSESVSEGHPDKVADQISDAVLDAILVQDPRARVACETMVKTGVAIIAGEITTSAWVDLEALTRKVIVDIGYNSSDVGFDGATCGVLNLIGKQSPDINQGVDRKKAEEQGAGDQGLMFGYATNETDSYMPAAIHISHRLVEQQAKIRKKSNSLLPWLRPDAKAQITLRYEDGVASAIDAVVLSTQHDPGIKQKDLVEAVREEILKPVLPSKWLHKGTKFHINPTGKFVIGGPVGDCGLTGRKIIVDTYGGSARHGGGAFSGKDPSKVDRSASYAVRYVAKNVVAAGLADRCEVQVSYAIGVAEPISISVTTFGTGKIPDDKIEKLICQHFDLRPYGIIKMLDLIHPIYQPSASYGHFGRKPRELAYTNSNGERVVATAFSWEKIDKAEVLRADAKLE.

Position 15 (His-15) interacts with ATP. Asp-17 is a binding site for Mg(2+). Glu-43 contacts K(+). 2 residues coordinate L-methionine: Glu-56 and Gln-99. The flexible loop stretch occupies residues 99-109 (QSPDINQGVDR). ATP is bound by residues 166-168 (DAK), 232-233 (KF), Asp-241, 247-248 (RK), Ala-264, and Lys-268. Asp-241 serves as a coordination point for L-methionine. An L-methionine-binding site is contributed by Lys-272.

Belongs to the AdoMet synthase family. As to quaternary structure, homotetramer; dimer of dimers. The cofactor is Mg(2+). It depends on K(+) as a cofactor.

It localises to the cytoplasm. The enzyme catalyses L-methionine + ATP + H2O = S-adenosyl-L-methionine + phosphate + diphosphate. The protein operates within amino-acid biosynthesis; S-adenosyl-L-methionine biosynthesis; S-adenosyl-L-methionine from L-methionine: step 1/1. Functionally, catalyzes the formation of S-adenosylmethionine (AdoMet) from methionine and ATP. The overall synthetic reaction is composed of two sequential steps, AdoMet formation and the subsequent tripolyphosphate hydrolysis which occurs prior to release of AdoMet from the enzyme. The polypeptide is S-adenosylmethionine synthase (Xylella fastidiosa (strain Temecula1 / ATCC 700964)).